The sequence spans 901 residues: Disease resistance RPP8-like protein 3 (901 aa).

Residues 15-56 are a coiled coil; the sequence is ALLNRESERLNGIDEQVDGLKRQLRGLQSLLKDADAKKHGSD. Residues 144–453 form the NB-ARC domain; that stretch reads LQDIQREIRQ…AEGIYDGLTI (310 aa). Residues 190–197 and 385–392 contribute to the ATP site; these read GMGGIGKT and GAQIVGKS. LRR repeat units follow at residues 567–591, 592–615, and 833–858; these read LPLLRVLDLSSVKFEGGKLPSSIGG, LIHLRFLSLHQAVVSHLPSTIRNL, and MPCLRDLIIHSCEKLEELPDGLKYVT.

The protein belongs to the disease resistance NB-LRR family. RPP8/HRT subfamily.

Its function is as follows. Disease resistance protein. The sequence is that of Disease resistance RPP8-like protein 3 (RPP8L3) from Arabidopsis thaliana (Mouse-ear cress).